The primary structure comprises 353 residues: Holliday junction branch migration complex subunit RuvB (353 aa).

Residues 1 to 25 (MDPGPAGDEVSLAPQQETAEQDVET) form a disordered region. Positions 1-188 (MDPGPAGDEV…FGFTAHMEFY (188 aa)) are large ATPase domain (RuvB-L). ATP is bound by residues L27, R28, G69, K72, T73, S74, 135–137 (EDY), R178, Y188, and R225. Residue T73 coordinates Mg(2+). A small ATPAse domain (RuvB-S) region spans residues 189–259 (EPAELELVVR…VARAALEVYD (71 aa)). Residues 262 to 353 (EHGLDRLDRA…ATRSLFADEV (92 aa)) form a head domain (RuvB-H) region. DNA is bound by residues R317 and R322.

Belongs to the RuvB family. In terms of assembly, homohexamer. Forms an RuvA(8)-RuvB(12)-Holliday junction (HJ) complex. HJ DNA is sandwiched between 2 RuvA tetramers; dsDNA enters through RuvA and exits via RuvB. An RuvB hexamer assembles on each DNA strand where it exits the tetramer. Each RuvB hexamer is contacted by two RuvA subunits (via domain III) on 2 adjacent RuvB subunits; this complex drives branch migration. In the full resolvosome a probable DNA-RuvA(4)-RuvB(12)-RuvC(2) complex forms which resolves the HJ.

The protein resides in the cytoplasm. The enzyme catalyses ATP + H2O = ADP + phosphate + H(+). In terms of biological role, the RuvA-RuvB-RuvC complex processes Holliday junction (HJ) DNA during genetic recombination and DNA repair, while the RuvA-RuvB complex plays an important role in the rescue of blocked DNA replication forks via replication fork reversal (RFR). RuvA specifically binds to HJ cruciform DNA, conferring on it an open structure. The RuvB hexamer acts as an ATP-dependent pump, pulling dsDNA into and through the RuvAB complex. RuvB forms 2 homohexamers on either side of HJ DNA bound by 1 or 2 RuvA tetramers; 4 subunits per hexamer contact DNA at a time. Coordinated motions by a converter formed by DNA-disengaged RuvB subunits stimulates ATP hydrolysis and nucleotide exchange. Immobilization of the converter enables RuvB to convert the ATP-contained energy into a lever motion, pulling 2 nucleotides of DNA out of the RuvA tetramer per ATP hydrolyzed, thus driving DNA branch migration. The RuvB motors rotate together with the DNA substrate, which together with the progressing nucleotide cycle form the mechanistic basis for DNA recombination by continuous HJ branch migration. Branch migration allows RuvC to scan DNA until it finds its consensus sequence, where it cleaves and resolves cruciform DNA. This Saccharopolyspora erythraea (strain ATCC 11635 / DSM 40517 / JCM 4748 / NBRC 13426 / NCIMB 8594 / NRRL 2338) protein is Holliday junction branch migration complex subunit RuvB.